The chain runs to 698 residues: Polyphosphate kinase (698 aa).

Residue asparagine 63 participates in ATP binding. Mg(2+) is bound by residues arginine 390 and arginine 420. Catalysis depends on histidine 450, which acts as the Phosphohistidine intermediate. Residues tyrosine 483, arginine 579, and histidine 607 each contribute to the ATP site.

The protein belongs to the polyphosphate kinase 1 (PPK1) family. Mg(2+) serves as cofactor. In terms of processing, an intermediate of this reaction is the autophosphorylated ppk in which a phosphate is covalently linked to a histidine residue through a N-P bond.

The enzyme catalyses [phosphate](n) + ATP = [phosphate](n+1) + ADP. Its function is as follows. Catalyzes the reversible transfer of the terminal phosphate of ATP to form a long-chain polyphosphate (polyP). This is Polyphosphate kinase from Xylella fastidiosa (strain Temecula1 / ATCC 700964).